We begin with the raw amino-acid sequence, 947 residues long: Protein translocase subunit SecA (947 aa).

Residues Gln87, Gly105–Thr109, and Asp494 each bind ATP. Residues Thr860–Arg947 form a disordered region. The span at Ala870–Ala885 shows a compositional bias: low complexity. Basic and acidic residues-rich tracts occupy residues Glu903–Ala914 and Ala922–Ala931.

It belongs to the SecA family. Monomer and homodimer. Part of the essential Sec protein translocation apparatus which comprises SecA, SecYEG and auxiliary proteins SecDF. Other proteins may also be involved.

It localises to the cell membrane. It is found in the cytoplasm. The catalysed reaction is ATP + H2O + cellular proteinSide 1 = ADP + phosphate + cellular proteinSide 2.. Part of the Sec protein translocase complex. Interacts with the SecYEG preprotein conducting channel. Has a central role in coupling the hydrolysis of ATP to the transfer of proteins into and across the cell membrane, serving as an ATP-driven molecular motor driving the stepwise translocation of polypeptide chains across the membrane. This is Protein translocase subunit SecA from Rhodococcus erythropolis (strain PR4 / NBRC 100887).